The sequence spans 463 residues: Cysteine--tRNA ligase (463 aa).

Cys28 is a binding site for Zn(2+). The 'HIGH' region signature appears at 30–40 (ITPYDLCHIGH). Residues Cys211, His236, and Glu240 each contribute to the Zn(2+) site. A 'KMSKS' region motif is present at residues 268–272 (KMSKS). Lys271 provides a ligand contact to ATP.

This sequence belongs to the class-I aminoacyl-tRNA synthetase family. In terms of assembly, monomer. Zn(2+) serves as cofactor.

It is found in the cytoplasm. It carries out the reaction tRNA(Cys) + L-cysteine + ATP = L-cysteinyl-tRNA(Cys) + AMP + diphosphate. This Wigglesworthia glossinidia brevipalpis protein is Cysteine--tRNA ligase.